Consider the following 240-residue polypeptide: Probable peptide export permease protein YydJ (240 aa).

Helical transmembrane passes span 13 to 33 (VIII…FLLV), 50 to 70 (SYTV…AFFI), 97 to 117 (IAVL…IISL), 126 to 146 (ALLL…IGTI), 153 to 173 (ILIS…LVAI), and 210 to 230 (VLFI…VLRF).

As to quaternary structure, the complex is composed of 2 ATP-binding proteins (YydI), two transmembrane proteins (YydJ).

It is found in the cell membrane. Its function is as follows. Suggested to be part of an ABC transporter complex YydIJ involved in export of the modified peptide YydF. The polypeptide is Probable peptide export permease protein YydJ (yydJ) (Bacillus subtilis (strain 168)).